The sequence spans 574 residues: Splicing factor U2af large subunit A (574 aa).

The segment at 1–180 (MAEHEEQPYE…SKRVSGFDQG (180 aa)) is disordered. Residues 18–41 (PAPASAYAEYPAPEGSPPAAAAKP) show a composition bias toward low complexity. The span at 53 to 143 (RSQHETQPHD…ERRRDRDRDG (91 aa)) shows a compositional bias: basic and acidic residues. Basic residues predominate over residues 144–172 (HRRHRSRSRSPSKGRDRRSRSRSRSRSSK). RRM domains follow at residues 238-321 (RRVY…RPTD), 358-436 (DRIF…RANQ), and 479-565 (QVVS…YPED).

The protein belongs to the splicing factor SR family.

The protein resides in the nucleus. In terms of biological role, necessary for the splicing of pre-mRNA. This is Splicing factor U2af large subunit A (U2AF65A) from Oryza sativa subsp. japonica (Rice).